The following is a 680-amino-acid chain: Nodulation protein NolNO (680 aa).

It belongs to the NodU/CmcH family.

The protein localises to the cytoplasm. Its function is as follows. Involved in the O-carbamoylation of nod factors. This Sinorhizobium fredii (strain NBRC 101917 / NGR234) protein is Nodulation protein NolNO (nolO).